The primary structure comprises 299 residues: Oxygen-dependent coproporphyrinogen-III oxidase (299 aa).

Residue Ser92 coordinates substrate. Mn(2+)-binding residues include His96 and His106. The Proton donor role is filled by His106. 108 to 110 (NVR) serves as a coordination point for substrate. Positions 145 and 175 each coordinate Mn(2+). The important for dimerization stretch occupies residues 240 to 275 (YVEFNLVWDRGTLFGLQTGGRTESILMSMPPLVRWE). Residue 258-260 (GGR) participates in substrate binding.

This sequence belongs to the aerobic coproporphyrinogen-III oxidase family. In terms of assembly, homodimer. It depends on Mn(2+) as a cofactor.

It localises to the cytoplasm. It catalyses the reaction coproporphyrinogen III + O2 + 2 H(+) = protoporphyrinogen IX + 2 CO2 + 2 H2O. Its pathway is porphyrin-containing compound metabolism; protoporphyrin-IX biosynthesis; protoporphyrinogen-IX from coproporphyrinogen-III (O2 route): step 1/1. Involved in the heme biosynthesis. Catalyzes the aerobic oxidative decarboxylation of propionate groups of rings A and B of coproporphyrinogen-III to yield the vinyl groups in protoporphyrinogen-IX. In Escherichia fergusonii (strain ATCC 35469 / DSM 13698 / CCUG 18766 / IAM 14443 / JCM 21226 / LMG 7866 / NBRC 102419 / NCTC 12128 / CDC 0568-73), this protein is Oxygen-dependent coproporphyrinogen-III oxidase.